The following is a 429-amino-acid chain: Serine hydroxymethyltransferase (429 aa).

Residues L126 and 130 to 132 (GHL) each bind (6S)-5,6,7,8-tetrahydrofolate. N6-(pyridoxal phosphate)lysine is present on K235. 359–361 (SPF) serves as a coordination point for (6S)-5,6,7,8-tetrahydrofolate.

The protein belongs to the SHMT family. In terms of assembly, homodimer. It depends on pyridoxal 5'-phosphate as a cofactor.

The protein localises to the cytoplasm. It catalyses the reaction (6R)-5,10-methylene-5,6,7,8-tetrahydrofolate + glycine + H2O = (6S)-5,6,7,8-tetrahydrofolate + L-serine. It functions in the pathway one-carbon metabolism; tetrahydrofolate interconversion. The protein operates within amino-acid biosynthesis; glycine biosynthesis; glycine from L-serine: step 1/1. Its function is as follows. Catalyzes the reversible interconversion of serine and glycine with tetrahydrofolate (THF) serving as the one-carbon carrier. This reaction serves as the major source of one-carbon groups required for the biosynthesis of purines, thymidylate, methionine, and other important biomolecules. Also exhibits THF-independent aldolase activity toward beta-hydroxyamino acids, producing glycine and aldehydes, via a retro-aldol mechanism. This chain is Serine hydroxymethyltransferase, found in Synechococcus sp. (strain CC9311).